Reading from the N-terminus, the 623-residue chain is Interferon-induced GTP-binding protein Mx3 (623 aa).

Positions 31–304 constitute a Dynamin-type G domain; the sequence is DLALPAIAVI…LVHHIEKSLP (274 aa). Residues 41-48 form a G1 motif region; it reads GDQSSGKS. 41–48 lines the GTP pocket; the sequence is GDQSSGKS. The tract at residues 66–68 is G2 motif; that stretch reads VTR. Residues 142-145 form a G3 motif region; sequence DLPG. GTP is bound by residues 142-146 and 211-214; these read DLPGI and TKPD. The G4 motif stretch occupies residues 211-214; it reads TKPD. A G5 motif region spans residues 243 to 246; sequence KCRG. The 87-residue stretch at 537 to 623 folds into the GED domain; that stretch reads LQEMMLHLKS…MKARSYLVEF (87 aa).

It belongs to the TRAFAC class dynamin-like GTPase superfamily. Dynamin/Fzo/YdjA family.

The protein resides in the cytoplasm. Functionally, does not inhibit strain RB-1 of the fish pathogen, infectious hematopoietic necrosis virus (IHNV). This Oncorhynchus mykiss (Rainbow trout) protein is Interferon-induced GTP-binding protein Mx3.